The chain runs to 24 residues: Arginine attenuator peptide (24 aa).

The protein belongs to the arginine attenuator peptide family.

In terms of biological role, arginine attenuator peptide (AAP) that has a regulatory role in the production of arginine-specific carbamoyl phosphate synthetase. Encoded by an upstream open reading frame (uORF) within the 5'-leader region of arginine-specific carbamoyl phosphate synthetase small chain (arg-2) mRNA, it attenuates the translation of the downstream arg-2 ORF. In the presence of high concentrations of arginine, ribosomes translating the uORF encoding AAP stall at the termination codon, resulting in reduced translation from the downstream arg-2 initiation codon. This is Arginine attenuator peptide from Neurospora crassa (strain ATCC 24698 / 74-OR23-1A / CBS 708.71 / DSM 1257 / FGSC 987).